The chain runs to 319 residues: Annexin A5 (319 aa).

N-acetylalanine is present on alanine 2. Annexin repeat units lie at residues 13 to 84 (FDGR…AMMK), 85 to 156 (PSRL…VLLQ), 168 to 240 (AQVE…AVVK), and 244 to 315 (SIPA…LLCG). Lysine 27 participates in a covalent cross-link: Glycyl lysine isopeptide (Lys-Gly) (interchain with G-Cter in SUMO1); alternate. Lysine 27 is covalently cross-linked (Glycyl lysine isopeptide (Lys-Gly) (interchain with G-Cter in SUMO2); alternate). At serine 35 the chain carries Phosphoserine. 5 positions are modified to N6-acetyllysine: lysine 68, lysine 74, lysine 77, lysine 95, and lysine 99. At lysine 288 the chain carries N6-succinyllysine. The [IL]-x-C-x-x-[DE] motif signature appears at 312 to 318 (LLCGGED).

Belongs to the annexin family. As to quaternary structure, monomer. Binds ATRX and EIF5B. Post-translationally, S-nitrosylation is induced by interferon-gamma and oxidatively-modified low-densitity lipoprotein (LDL(ox)) possibly implicating the iNOS-S100A8/9 transnitrosylase complex.

This protein is an anticoagulant protein that acts as an indirect inhibitor of the thromboplastin-specific complex, which is involved in the blood coagulation cascade. The sequence is that of Annexin A5 (Anxa5) from Mus musculus (Mouse).